We begin with the raw amino-acid sequence, 474 residues long: tRNA-2-methylthio-N(6)-dimethylallyladenosine synthase (474 aa).

The MTTase N-terminal domain maps to lysine 3 to glycine 120. [4Fe-4S] cluster is bound by residues cysteine 12, cysteine 49, cysteine 83, cysteine 157, cysteine 161, and cysteine 164. Positions arginine 143–alanine 375 constitute a Radical SAM core domain. Residues arginine 378 to arginine 441 enclose the TRAM domain.

Belongs to the methylthiotransferase family. MiaB subfamily. In terms of assembly, monomer. [4Fe-4S] cluster is required as a cofactor.

Its subcellular location is the cytoplasm. The catalysed reaction is N(6)-dimethylallyladenosine(37) in tRNA + (sulfur carrier)-SH + AH2 + 2 S-adenosyl-L-methionine = 2-methylsulfanyl-N(6)-dimethylallyladenosine(37) in tRNA + (sulfur carrier)-H + 5'-deoxyadenosine + L-methionine + A + S-adenosyl-L-homocysteine + 2 H(+). In terms of biological role, catalyzes the methylthiolation of N6-(dimethylallyl)adenosine (i(6)A), leading to the formation of 2-methylthio-N6-(dimethylallyl)adenosine (ms(2)i(6)A) at position 37 in tRNAs that read codons beginning with uridine. The protein is tRNA-2-methylthio-N(6)-dimethylallyladenosine synthase of Cronobacter sakazakii (strain ATCC BAA-894) (Enterobacter sakazakii).